The sequence spans 207 residues: Large ribosomal subunit protein bL25 (207 aa).

The protein belongs to the bacterial ribosomal protein bL25 family. CTC subfamily. In terms of assembly, part of the 50S ribosomal subunit; part of the 5S rRNA/L5/L18/L25 subcomplex. Contacts the 5S rRNA. Binds to the 5S rRNA independently of L5 and L18.

Its function is as follows. This is one of the proteins that binds to the 5S RNA in the ribosome where it forms part of the central protuberance. This Orientia tsutsugamushi (strain Boryong) (Rickettsia tsutsugamushi) protein is Large ribosomal subunit protein bL25.